Here is a 186-residue protein sequence, read N- to C-terminus: Protein GrpE (186 aa).

Polar residues predominate over residues 1-15 (MADEQQTLDQQTPEQ). Residues 1-20 (MADEQQTLDQQTPEQPTGAA) form a disordered region.

It belongs to the GrpE family. As to quaternary structure, homodimer.

It localises to the cytoplasm. Participates actively in the response to hyperosmotic and heat shock by preventing the aggregation of stress-denatured proteins, in association with DnaK and GrpE. It is the nucleotide exchange factor for DnaK and may function as a thermosensor. Unfolded proteins bind initially to DnaJ; upon interaction with the DnaJ-bound protein, DnaK hydrolyzes its bound ATP, resulting in the formation of a stable complex. GrpE releases ADP from DnaK; ATP binding to DnaK triggers the release of the substrate protein, thus completing the reaction cycle. Several rounds of ATP-dependent interactions between DnaJ, DnaK and GrpE are required for fully efficient folding. In Pseudomonas aeruginosa (strain UCBPP-PA14), this protein is Protein GrpE.